The following is a 1229-amino-acid chain: ABC transporter B family member 3 (1229 aa).

A helical membrane pass occupies residues 22 to 42 (VLLMIVGSIGAIGNGVGFPLM). Positions 25–313 (MIVGSIGAIG…TTPCLTAFAA (289 aa)) constitute an ABC transmembrane type-1 1 domain. N-linked (GlcNAc...) asparagine glycosylation occurs at N56. The next 5 membrane-spanning stretches (helical) occupy residues 73–93 (FVYLGLGTLGAAFLQVACWMI), 149–169 (FIQLIATFVGGFVLAFVKGWL), 172–192 (LVMLVSIPLLAIAGAAMPIIV), 252–272 (GLGLGVVFFVFFCSYALAIWF), and 281–301 (GYTGGEVVNVMVTVVASSMSL). One can recognise an ABC transporter 1 domain in the interval 348 to 584 (IELRDVCFSY…HEGAYAQLIR (237 aa)). An ATP-binding site is contributed by 383–390 (GESGSGKS). Residue N450 is glycosylated (N-linked (GlcNAc...) asparagine). Basic and acidic residues predominate over residues 594 to 606 (RLESSNELRDRSI). The interval 594–614 (RLESSNELRDRSINRGSSRNI) is disordered. N645 carries an N-linked (GlcNAc...) asparagine glycan. A run of 2 helical transmembrane segments spans residues 661 to 681 (ILILGTLLGAVNGTIFPIFGI) and 706 to 726 (MIFVLLGVASLIVYPMHTYLF). The region spanning 662-949 (LILGTLLGAV…ASSFAPDSSK (288 aa)) is the ABC transmembrane type-1 2 domain. N758 is a glycosylation site (N-linked (GlcNAc...) asparagine). The next 3 helical transmembrane spans lie at 797 to 817 (IIAFTASWKLAVIILVMIPLI), 888 to 908 (GVGFGISFFVLYSVYASCFYV), and 923 to 943 (VFQVFLALTMTAIGISQASSF). Residues 984-1222 (IELCHISFTY…EGGVYASLVQ (239 aa)) form the ABC transporter 2 domain. 1019–1026 (GESGSGKS) lines the ATP pocket. N-linked (GlcNAc...) asparagine glycans are attached at residues N1073 and N1173.

Belongs to the ABC transporter superfamily. ABCB family. Multidrug resistance exporter (TC 3.A.1.201) subfamily.

Its subcellular location is the membrane. The chain is ABC transporter B family member 3 (ABCB3) from Arabidopsis thaliana (Mouse-ear cress).